The chain runs to 60 residues: Large ribosomal subunit protein bL32 (60 aa).

Residues 1-28 (MAVQQNKKSRSKRDMRRSHDALTGPTLS) are disordered. The segment covering 7–16 (KKSRSKRDMR) has biased composition (basic residues).

It belongs to the bacterial ribosomal protein bL32 family.

The sequence is that of Large ribosomal subunit protein bL32 from Cellvibrio japonicus (strain Ueda107) (Pseudomonas fluorescens subsp. cellulosa).